A 151-amino-acid polypeptide reads, in one-letter code: Cytochrome c-type biogenesis protein CcmE (151 aa).

At 1–8 the chain is on the cytoplasmic side; it reads MNPLRKKR. The helical; Signal-anchor for type II membrane protein transmembrane segment at 9 to 29 threads the bilayer; the sequence is LLIILAILVGVGIAVGLALSA. At 30–151 the chain is on the periplasmic side; sequence LKENINLFYT…QSAPTPAKEG (122 aa). The heme site is built by H124 and Y128. The disordered stretch occupies residues 131–151; the sequence is PEVTKALKDSGQSAPTPAKEG.

Belongs to the CcmE/CycJ family.

It is found in the cell inner membrane. Functionally, heme chaperone required for the biogenesis of c-type cytochromes. Transiently binds heme delivered by CcmC and transfers the heme to apo-cytochromes in a process facilitated by CcmF and CcmH. The polypeptide is Cytochrome c-type biogenesis protein CcmE (Pseudomonas fluorescens (strain ATCC BAA-477 / NRRL B-23932 / Pf-5)).